The following is a 584-amino-acid chain: Phenylalanine--tRNA ligase beta subunit (584 aa).

The region spanning 290 to 369 (FSVRTKTVTH…RALGFNSLEP (80 aa)) is the B5 domain. D347, D353, D356, and D357 together coordinate Mg(2+).

Belongs to the phenylalanyl-tRNA synthetase beta subunit family. Type 2 subfamily. Tetramer of two alpha and two beta subunits. The cofactor is Mg(2+).

It is found in the cytoplasm. It carries out the reaction tRNA(Phe) + L-phenylalanine + ATP = L-phenylalanyl-tRNA(Phe) + AMP + diphosphate + H(+). The protein is Phenylalanine--tRNA ligase beta subunit of Haloarcula marismortui (strain ATCC 43049 / DSM 3752 / JCM 8966 / VKM B-1809) (Halobacterium marismortui).